The following is a 263-amino-acid chain: (2Z,6E)-farnesyl diphosphate synthase (263 aa).

The active site involves D40. D40 is a Mg(2+) binding site. Residues G41–R44, W45, and S86–E88 each bind substrate. N89 (proton acceptor) is an active-site residue. Residues R92, R212, and R218–S220 each bind substrate. A Mg(2+)-binding site is contributed by E231.

Belongs to the UPP synthase family. Z-FPP synthase subfamily. As to quaternary structure, homodimer. It depends on Mg(2+) as a cofactor.

The protein localises to the cell membrane. It carries out the reaction isopentenyl diphosphate + (2E)-geranyl diphosphate = (2Z,6E)-farnesyl diphosphate + diphosphate. Its function is as follows. Catalyzes the condensation of only one isopentenyl pyrophosphate (IPP) unit in the cis configuration to E-geranyl diphosphate (E-GPP) generating the 15 carbon product (2Z,6E)-farnesyl diphosphate (Z-FPP or EZ-FPP). Z-FPP is the precursor of decaprenyl diphosphate, which has a central role in the biosynthesis of the mycobacterial cell wall. In Mycolicibacterium smegmatis (strain ATCC 700084 / mc(2)155) (Mycobacterium smegmatis), this protein is (2Z,6E)-farnesyl diphosphate synthase (uppS).